The chain runs to 327 residues: Movement protein (327 aa).

Residues 297–327 (IASSSSTENELARVSQNIDLLKNKLKEICGE) are a coiled coil.

Belongs to the caulimoviridae movement protein family. Homotrimer, through the coiled-coil domain. Interacts with VAP. May interact (via N-terminus) with host prenylated Rab acceptor protein 1D (PRA1D).

It localises to the host cell junction. Its subcellular location is the host plasmodesma. Its function is as follows. Transports viral genome to neighboring plant cells directly through plasmosdesmata, without any budding. The movement protein allows efficient cell to cell propagation, by bypassing the host cell wall barrier. Acts by forming tubules structures that increase the size exclusion limit (SEL) of plasmodesmata, thereby allowing viral ribonucleocapsids to spread directly to neighboring cells. This is Movement protein from Cauliflower mosaic virus (strain D/H) (CaMV).